The sequence spans 93 residues: Small ribosomal subunit protein uS19 (93 aa).

This sequence belongs to the universal ribosomal protein uS19 family.

In terms of biological role, protein S19 forms a complex with S13 that binds strongly to the 16S ribosomal RNA. This is Small ribosomal subunit protein uS19 from Desulfitobacterium hafniense (strain DSM 10664 / DCB-2).